We begin with the raw amino-acid sequence, 414 residues long: MTKKIALLLLPFILISCNGLGPKRVKNIVELTPKLAIQTHEPIYLDSNANIYAFNANMLKNKQYSFARSKTITEPVFIGDMIYALDIRSNISAFSIEKNKIIWSYNLSRHKKDNYIGGGILHHNGKLYVTYGSRLLVVLDAKSGYEIIRKELPDIIRIKPIVLNDNTVLVQTISNQTIALNAETLKTVWEHESLAEVLSASYFMTPIVQYDNVIVTYNSGQILALNITNGEVKWNFEFTNLNDRTAIPNFDESSILCTPVHDNMNLYIATGLGKLIKLNVATGSVIWQVNAEDIQSMSLIGNSLFVTNNARQIAAFNPETGKVKFVADLNDGQDPKKLKSAAFLVPFVGVNNNNKRSLNVISVNGVLYSFDVDNNGLNMIPHVVKIIKNIRYYGLSANNNLYFSTDSKIIFGSK.

This is an uncharacterized protein from Rickettsia conorii (strain ATCC VR-613 / Malish 7).